We begin with the raw amino-acid sequence, 318 residues long: MPPPNSAPPAQVVFVTGPSGAGRSTVINALEDLGFEAIDNLPLSLLPRLLEGAPPDRPLALCIDPRTRDFDARDLIHAYEKLEQDPAYTADLVFIDCEPATLQRRYSETRRRHPLAPDADPADGIAIEREMLAPLRTRADVLIDTTPLTVHRTRDEVIRLFALDRAPAMSIQIMSFSYRRALPISADLVFDCRFLRNPHWAPELRAKDGRQSDVQAYVAQDARFEAFRTQINAMLDLLLPAFKEEGKSHLTVAFGCTGGRHRSVTLAELTARRLAEEGWQVSKRHRDVDKDASENSDRDRGASARTAASTDDGEAEQP.

17–24 (GPSGAGRS) lines the ATP pocket. 64 to 67 (DPRT) is a GTP binding site. The segment at 278-318 (GWQVSKRHRDVDKDASENSDRDRGASARTAASTDDGEAEQP) is disordered. Positions 286–302 (RDVDKDASENSDRDRGA) are enriched in basic and acidic residues.

Belongs to the RapZ-like family.

Displays ATPase and GTPase activities. This chain is Nucleotide-binding protein Jann_0539, found in Jannaschia sp. (strain CCS1).